A 513-amino-acid chain; its full sequence is Activin receptor type-2B (513 aa).

A signal peptide spans 1–18 (MTAPWAALALLWGSLCAG). The Extracellular segment spans residues 19–137 (SGRGEAETRE…PPPTAPTLLT (119 aa)). 5 disulfides stabilise this stretch: C29-C59, C49-C77, C84-C103, C90-C102, and C104-C109. Residues N42 and N65 are each glycosylated (N-linked (GlcNAc...) asparagine). A helical membrane pass occupies residues 138-158 (VLAYSLLPIGGLSLIVLLAFW). Over 159-513 (MYRHRKPPYG…VDLLPKESSI (355 aa)) the chain is Cytoplasmic. Residues 190 to 481 (LQLLEIKARG…AGCVEERVSL (292 aa)) form the Protein kinase domain. ATP is bound by residues 196 to 204 (KARGRFGCV) and K217. The Proton acceptor role is filled by D322. The tract at residues 492-513 (DCLVSLVTSVTNVDLLPKESSI) is interaction with DYNLT1.

It belongs to the protein kinase superfamily. TKL Ser/Thr protein kinase family. TGFB receptor subfamily. In terms of assembly, forms an activin receptor complex with activin type II receptors such as ACVR1B. Interacts with VPS39. Interacts with DYNLT1. Interacts with BMP3. Interacts with BMP2. Mg(2+) is required as a cofactor. The cofactor is Mn(2+). Phosphorylated. Constitutive phosphorylation is in part catalyzed by its own kinase activity.

The protein localises to the cell membrane. The catalysed reaction is L-threonyl-[receptor-protein] + ATP = O-phospho-L-threonyl-[receptor-protein] + ADP + H(+). The enzyme catalyses L-seryl-[receptor-protein] + ATP = O-phospho-L-seryl-[receptor-protein] + ADP + H(+). In terms of biological role, transmembrane serine/threonine kinase activin type-2 receptor forming an activin receptor complex with activin type-1 serine/threonine kinase receptors (ACVR1, ACVR1B or ACVR1c). Transduces the activin signal from the cell surface to the cytoplasm and is thus regulating many physiological and pathological processes including neuronal differentiation and neuronal survival, hair follicle development and cycling, FSH production by the pituitary gland, wound healing, extracellular matrix production, immunosuppression and carcinogenesis. Activin is also thought to have a paracrine or autocrine role in follicular development in the ovary. Within the receptor complex, the type-2 receptors act as a primary activin receptors (binds activin-A/INHBA, activin-B/INHBB as well as inhibin-A/INHA-INHBA). The type-1 receptors like ACVR1B act as downstream transducers of activin signals. Activin binds to type-2 receptor at the plasma membrane and activates its serine-threonine kinase. The activated receptor type-2 then phosphorylates and activates the type-1 receptor. Once activated, the type-1 receptor binds and phosphorylates the SMAD proteins SMAD2 and SMAD3, on serine residues of the C-terminal tail. Soon after their association with the activin receptor and subsequent phosphorylation, SMAD2 and SMAD3 are released into the cytoplasm where they interact with the common partner SMAD4. This SMAD complex translocates into the nucleus where it mediates activin-induced transcription. Inhibitory SMAD7, which is recruited to ACVR1B through FKBP1A, can prevent the association of SMAD2 and SMAD3 with the activin receptor complex, thereby blocking the activin signal. Activin signal transduction is also antagonized by the binding to the receptor of inhibin-B via the IGSF1 inhibin coreceptor. The sequence is that of Activin receptor type-2B (Acvr2b) from Rattus norvegicus (Rat).